We begin with the raw amino-acid sequence, 315 residues long: Glutathione synthetase (315 aa).

The ATP-grasp domain occupies 125–310; it reads KLFTAWFSDL…ITGMLMDAIE (186 aa). The N-beta-linked (GlcNAc) arginine glycan is linked to Arg-256. Mg(2+)-binding residues include Glu-281 and Asn-283.

It belongs to the prokaryotic GSH synthase family. The cofactor is Mg(2+). Mn(2+) is required as a cofactor. Post-translationally, glycosylation at Arg-256 by NleB enhances the glutathione synthetase activity, leading to an increase in glutathione production. Glycosylation may promote C.rodentium survival in oxidative stress conditions.

It carries out the reaction gamma-L-glutamyl-L-cysteine + glycine + ATP = glutathione + ADP + phosphate + H(+). It participates in sulfur metabolism; glutathione biosynthesis; glutathione from L-cysteine and L-glutamate: step 2/2. This chain is Glutathione synthetase, found in Citrobacter rodentium.